The chain runs to 438 residues: Histidinol dehydrogenase (438 aa).

The NAD(+) site is built by Y137, Q198, and N221. Substrate-binding residues include S244, Q266, and H269. Zn(2+) is bound by residues Q266 and H269. Catalysis depends on proton acceptor residues E334 and H335. H335, D368, E422, and H427 together coordinate substrate. D368 serves as a coordination point for Zn(2+). H427 lines the Zn(2+) pocket.

The protein belongs to the histidinol dehydrogenase family. Zn(2+) is required as a cofactor.

The catalysed reaction is L-histidinol + 2 NAD(+) + H2O = L-histidine + 2 NADH + 3 H(+). The protein operates within amino-acid biosynthesis; L-histidine biosynthesis; L-histidine from 5-phospho-alpha-D-ribose 1-diphosphate: step 9/9. Catalyzes the sequential NAD-dependent oxidations of L-histidinol to L-histidinaldehyde and then to L-histidine. This is Histidinol dehydrogenase from Aromatoleum aromaticum (strain DSM 19018 / LMG 30748 / EbN1) (Azoarcus sp. (strain EbN1)).